A 347-amino-acid chain; its full sequence is Queuosine 5'-phosphate N-glycosylase/hydrolase (347 aa).

Positions 53, 237, 239, 321, and 326 each coordinate queuine. Aspartate 239 acts as the Nucleophile or transition state stabilizer in catalysis.

The protein belongs to the QNG1 protein family.

The enzyme catalyses queuosine 5'-phosphate + H2O = queuine + D-ribose 5-phosphate. Catalyzes the hydrolysis of queuosine 5'-phosphate, releasing the nucleobase queuine (q). Is required for salvage of queuine from exogenous queuosine (Q) that is imported and then converted to queuosine 5'-phosphate intracellularly. This Nematostella vectensis (Starlet sea anemone) protein is Queuosine 5'-phosphate N-glycosylase/hydrolase.